We begin with the raw amino-acid sequence, 80 residues long: Defensin coprisin (80 aa).

The N-terminal stretch at 1-20 (MAKLIAFALVASLCLSMVLC) is a signal peptide. A propeptide spanning residues 21–37 (NPLPEEVQEEGLVRQKR) is cleaved from the precursor. Disulfide bonds link C40–C71, C57–C76, and C61–C78.

Belongs to the invertebrate defensin family. Type 1 subfamily.

Its subcellular location is the secreted. The protein resides in the target cell membrane. In terms of biological role, potent broad-spectrum antibacterial peptide against both Gram-positive (B.subtilis, S.epidermidis, and S.aureus) and Gram-negative bacteria (E.coli, S.typhimurium, and P.aeruginosa). Is also active against all antibiotic-resistant bacterial strains tested. Induces apoptosis in C.albicans, but does not disrupt the fungal plasma membrane at all. Acts by permeabilizing the bacterial cell membrane, but not human membranes. Also shows potent anti-inflammatory activities, since it reduces both LPS-induced nitric oxide release and pro-inflammatory cytokine production. Anti-inflammatory activities are initiated by suppressing the binding of LPS to toll-like receptor 4 (TLR4), and subsequently inhibiting the phosphorylation of p38 mitogen-activated protein kinase (MAPK) and nuclear translocation of NF-kB (TNFRSF11A). Does not show hemolytic activity against human erythrocytes. In Copris tripartitus (Dung beetle), this protein is Defensin coprisin.